Reading from the N-terminus, the 68-residue chain is Large ribosomal subunit protein uL30 (68 aa).

The protein belongs to the universal ribosomal protein uL30 family. In terms of assembly, part of the 50S ribosomal subunit.

The sequence is that of Large ribosomal subunit protein uL30 from Bartonella tribocorum (strain CIP 105476 / IBS 506).